Consider the following 161-residue polypeptide: MLLLLLGILFLHIAVLVLLFVSTIVSQWLVGNGHTTDLWQNCTTSALGAVQHCYSSSVSEWLQSVQATMILSVIFSVLALFLFFCQLFTLTKGGRFYITGFFQILAGLCVMSAAAIYTVRHSEWHVNTDYSYGFAYILAWVAFPLALLSGIIYVILRKREL.

A topological domain (cytoplasmic) is located at residue methionine 1. A helical transmembrane segment spans residues 2 to 31; that stretch reads LLLLLGILFLHIAVLVLLFVSTIVSQWLVG. Residues 32 to 64 lie on the Extracellular side of the membrane; that stretch reads NGHTTDLWQNCTTSALGAVQHCYSSSVSEWLQS. Asparagine 41 carries an N-linked (GlcNAc...) asparagine glycan. A helical membrane pass occupies residues 65–91; sequence VQATMILSVIFSVLALFLFFCQLFTLT. Over 92–95 the chain is Cytoplasmic; that stretch reads KGGR. Residues 96–119 traverse the membrane as a helical segment; the sequence is FYITGFFQILAGLCVMSAAAIYTV. The Extracellular segment spans residues 120–133; sequence RHSEWHVNTDYSYG. The chain crosses the membrane as a helical span at residues 134-156; that stretch reads FAYILAWVAFPLALLSGIIYVIL. Residues 157-160 lie on the Cytoplasmic side of the membrane; the sequence is RKRE.

Belongs to the PMP-22/EMP/MP20 family. In terms of processing, ubiquitinated by the DCX(DCAF13) E3 ubiquitin ligase complex, leading to its degradation. In terms of tissue distribution, schwann cells of the peripheral nervous system. Expressed at growth arrest of mammalian fibroblasts.

It is found in the cell membrane. Functionally, might be involved in growth regulation, and in myelinization in the peripheral nervous system. The protein is Peripheral myelin protein 22 (Pmp22) of Mus musculus (Mouse).